The primary structure comprises 562 residues: Arginine--tRNA ligase (562 aa).

The 'HIGH' region motif lies at 129-139; that stretch reads ANPTGPLHVGH.

This sequence belongs to the class-I aminoacyl-tRNA synthetase family. As to quaternary structure, monomer.

Its subcellular location is the cytoplasm. It catalyses the reaction tRNA(Arg) + L-arginine + ATP = L-arginyl-tRNA(Arg) + AMP + diphosphate. The sequence is that of Arginine--tRNA ligase from Xanthomonas axonopodis pv. citri (strain 306).